A 330-amino-acid polypeptide reads, in one-letter code: Tryptophan--tRNA ligase (330 aa).

Residues 10 to 12 and 18 to 19 each bind ATP; these read QAT and GN. Positions 11-19 match the 'HIGH' region motif; that stretch reads ATGSLHLGN. Asp134 contributes to the L-tryptophan binding site. ATP is bound by residues 146–148, Ile186, and 195–199; these read GED and KMSKS. The short motif at 195–199 is the 'KMSKS' region element; it reads KMSKS.

The protein belongs to the class-I aminoacyl-tRNA synthetase family. Homodimer.

It is found in the cytoplasm. The enzyme catalyses tRNA(Trp) + L-tryptophan + ATP = L-tryptophyl-tRNA(Trp) + AMP + diphosphate + H(+). In terms of biological role, catalyzes the attachment of tryptophan to tRNA(Trp). The chain is Tryptophan--tRNA ligase from Rickettsia conorii (strain ATCC VR-613 / Malish 7).